The sequence spans 1499 residues: B-cell CLL/lymphoma 9-like protein (1499 aa).

2 disordered regions span residues 1-238 (MRIL…PPSQ) and 271-500 (VPRA…MGQQ). Over residues 20–37 (GSPPLSPRGHCPPAPAKP) the composition is skewed to pro residues. Phosphoserine occurs at positions 21 and 25. Residue K36 is modified to N6-acetyllysine. Composition is skewed to polar residues over residues 45-70 (TNHGKTGNGGAQSQHQNVNQGPTCNV) and 85-96 (NQISPSNSSLKN). S88 carries the phosphoserine modification. N6-acetyllysine is present on residues K108 and K110. Composition is skewed to basic and acidic residues over residues 114 to 126 (DRSVSVDSGEQRE) and 134 to 153 (SEAKEVAPRSKRRCVLERKQ). Residues S116 and S118 each carry the phosphoserine modification. K137 is subject to N6-acetyllysine. Polar residues predominate over residues 193–205 (PGQTTQLPLSESS). A compositionally biased stretch (gly residues) spans 222 to 232 (PGGGGGGGGVP). 2 stretches are compositionally biased toward pro residues: residues 281-291 (KVPPTPEPLPL) and 301-325 (SQPPPLPPPPPPAPGSAPPALPPEG). The tract at residues 304 to 533 (PPLPPPPPPA…QEEYYEEKRR (230 aa)) is necessary for interaction with CTNNB1. 2 stretches are compositionally biased toward low complexity: residues 351–363 (THPNTPTATTANN) and 370–387 (DPSSAPGPALLGEAAAPG). Over residues 399-421 (LSKEQLEHRERSLQTLRDIERLL) the composition is skewed to basic and acidic residues. Position 424 is a phosphoserine (S424). Pro residues predominate over residues 445–458 (AQAPPPPQQPPTAP). At T514 the chain carries Phosphothreonine. R680 is subject to Asymmetric dimethylarginine. Residues S750, S813, S915, S926, S938, S942, S947, S975, S987, S991, S997, S1004, S1010, and S1017 each carry the phosphoserine modification. 2 disordered regions span residues 888-1084 (SHMP…QNPL) and 1116-1201 (ELLP…PQNS). A compositionally biased stretch (polar residues) spans 935-960 (PTLSQVHSPLVTSPSANLKSPQTPSQ). Residues 978–996 (VLGSSLSVRSPTGSPSRLK) show a composition bias toward polar residues. Composition is skewed to polar residues over residues 1019–1041 (GVSQNKQPPLNMNSSTTLSNMEQ) and 1069–1084 (LPFTSSPDPTPSQNPL). Composition is skewed to pro residues over residues 1122–1132 (PLLPPPPPPQG) and 1168–1179 (HEPPPAMLPSPT). Residue K1344 forms a Glycyl lysine isopeptide (Lys-Gly) (interchain with G-Cter in SUMO2) linkage.

This sequence belongs to the BCL9 family. In terms of assembly, found in a complex with CDC73; CTNNB1 and PYGO1. Interacts with CTNNB1. In terms of tissue distribution, expressed in breast, ductal and invasive ductal carcinomas of the breast, sporadic colorectal adenomas and carcinomas (at protein level). Expressed in fetal brain. Expressed in lung, amygdala, eye, prostate, pancreatic and prostate cancers, head and neck tumors and embryonal tumor.

The protein resides in the nucleus. Its function is as follows. Transcriptional regulator that acts as an activator. Promotes beta-catenin transcriptional activity. Plays a role in tumorigenesis. Enhances the neoplastic transforming activity of CTNNB1. This chain is B-cell CLL/lymphoma 9-like protein (BCL9L), found in Homo sapiens (Human).